The primary structure comprises 453 residues: tRNA modification GTPase MnmE (453 aa).

Positions 22, 79, and 119 each coordinate (6S)-5-formyl-5,6,7,8-tetrahydrofolate. The TrmE-type G domain maps to G215 to G376. N225 lines the K(+) pocket. GTP contacts are provided by residues N225–S230, T244–T250, D269–G272, and N334–D337. S229 is a Mg(2+) binding site. Residues T244, I246, and T249 each contribute to the K(+) site. T250 contacts Mg(2+). (6S)-5-formyl-5,6,7,8-tetrahydrofolate is bound at residue K453.

The protein belongs to the TRAFAC class TrmE-Era-EngA-EngB-Septin-like GTPase superfamily. TrmE GTPase family. In terms of assembly, homodimer. Heterotetramer of two MnmE and two MnmG subunits. Requires K(+) as cofactor.

The protein resides in the cytoplasm. Exhibits a very high intrinsic GTPase hydrolysis rate. Involved in the addition of a carboxymethylaminomethyl (cmnm) group at the wobble position (U34) of certain tRNAs, forming tRNA-cmnm(5)s(2)U34. The polypeptide is tRNA modification GTPase MnmE (Shewanella putrefaciens (strain CN-32 / ATCC BAA-453)).